Reading from the N-terminus, the 207-residue chain is Uracil phosphoribosyltransferase (207 aa).

5-phospho-alpha-D-ribose 1-diphosphate contacts are provided by residues R77, R102, and 129–137 (DPMLATGGS). Residues I192 and 197–199 (GDA) each bind uracil. D198 is a 5-phospho-alpha-D-ribose 1-diphosphate binding site.

The protein belongs to the UPRTase family. The cofactor is Mg(2+).

The catalysed reaction is UMP + diphosphate = 5-phospho-alpha-D-ribose 1-diphosphate + uracil. Its pathway is pyrimidine metabolism; UMP biosynthesis via salvage pathway; UMP from uracil: step 1/1. With respect to regulation, allosterically activated by GTP. Catalyzes the conversion of uracil and 5-phospho-alpha-D-ribose 1-diphosphate (PRPP) to UMP and diphosphate. This Dictyoglomus turgidum (strain DSM 6724 / Z-1310) protein is Uracil phosphoribosyltransferase.